Here is a 323-residue protein sequence, read N- to C-terminus: Elongation factor P--(R)-beta-lysine ligase (323 aa).

A substrate-binding site is contributed by 74 to 76; it reads SPE. ATP is bound by residues 98–100 and N107; that span reads RNE. Residue Y116 coordinates substrate. ATP is bound at residue 242–243; that stretch reads EL. E249 contacts substrate. G298 contributes to the ATP binding site.

This sequence belongs to the class-II aminoacyl-tRNA synthetase family. EpmA subfamily. As to quaternary structure, homodimer.

The catalysed reaction is D-beta-lysine + L-lysyl-[protein] + ATP = N(6)-((3R)-3,6-diaminohexanoyl)-L-lysyl-[protein] + AMP + diphosphate + H(+). With EpmB is involved in the beta-lysylation step of the post-translational modification of translation elongation factor P (EF-P). Catalyzes the ATP-dependent activation of (R)-beta-lysine produced by EpmB, forming a lysyl-adenylate, from which the beta-lysyl moiety is then transferred to the epsilon-amino group of a conserved specific lysine residue in EF-P. The protein is Elongation factor P--(R)-beta-lysine ligase of Vibrio vulnificus (strain YJ016).